The chain runs to 312 residues: Ribosomal protein L11 methyltransferase (312 aa).

The S-adenosyl-L-methionine site is built by Thr-160, Gly-181, Asp-203, and Asn-246.

Belongs to the methyltransferase superfamily. PrmA family.

Its subcellular location is the cytoplasm. The catalysed reaction is L-lysyl-[protein] + 3 S-adenosyl-L-methionine = N(6),N(6),N(6)-trimethyl-L-lysyl-[protein] + 3 S-adenosyl-L-homocysteine + 3 H(+). Methylates ribosomal protein L11. This Staphylococcus aureus (strain USA300) protein is Ribosomal protein L11 methyltransferase.